A 1347-amino-acid polypeptide reads, in one-letter code: Spermatogenesis-associated protein 31A1 (1347 aa).

A helical transmembrane segment spans residues 23-43 (PWVLDIFLTLVFALGFFFLLL). Disordered stretches follow at residues 55 to 89 (PSPS…ECPR), 106 to 235 (GPHL…STLI), 373 to 397 (EQDT…GPQK), 628 to 658 (DESP…EAQK), 899 to 955 (PRGI…REAV), and 1085 to 1160 (HEEP…PPSV). Residues 60–82 (GKRKCPVGRRRRPRGRMKNHSLR) are compositionally biased toward basic residues. Residues 165–178 (LASTPSPGPMTTSV) show a composition bias toward polar residues. Positions 198–222 (PEPPALFPHPPHTPDPLACSPPPPK) are enriched in pro residues. 2 stretches are compositionally biased toward polar residues: residues 631-651 (PGTS…STGE) and 927-948 (LTYS…SSKA). Basic and acidic residues-rich tracts occupy residues 1108 to 1127 (HKSE…RLEG) and 1137 to 1146 (RKTEDTHQDE).

Belongs to the SPATA31 family.

Its subcellular location is the membrane. Its function is as follows. May play a role in spermatogenesis. The polypeptide is Spermatogenesis-associated protein 31A1 (Homo sapiens (Human)).